Here is a 523-residue protein sequence, read N- to C-terminus: Calcium and calcium/calmodulin-dependent serine/threonine-protein kinase DMI-3 (523 aa).

The 295-residue stretch at 12 to 306 (YEVSEILGRG…ALELLSDPWV (295 aa)) folds into the Protein kinase domain. Residues 18–26 (LGRGGFSVV) and lysine 47 each bind ATP. Aspartate 171 serves as the catalytic Proton acceptor. Threonine 271 carries the post-translational modification Phosphothreonine. The tract at residues 329-342 (ARRKLRAAAIASVW) is calmodulin-binding. 3 EF-hand domains span residues 400–435 (SLIP…LKNS), 436–471 (KGED…LPYD), and 478–513 (TEPG…DSSL). Residues aspartate 413, asparagine 415, aspartate 417, threonine 419, glutamate 424, aspartate 449, aspartate 451, serine 453, cysteine 455, glutamate 460, aspartate 491, asparagine 493, aspartate 495, lysine 497, and glutamate 502 each coordinate Ca(2+).

Belongs to the protein kinase superfamily. CAMK Ser/Thr protein kinase family. CaMK subfamily. Interacts with IPD3. In terms of processing, autophosphorylation. As to expression, highly expressed in roots. Expressed in root hairs and nodules. Expressed at low levels in flowers. Not detected in leaves or stems.

It localises to the nucleus. It catalyses the reaction L-seryl-[protein] + ATP = O-phospho-L-seryl-[protein] + ADP + H(+). The catalysed reaction is L-threonyl-[protein] + ATP = O-phospho-L-threonyl-[protein] + ADP + H(+). Its activity is regulated as follows. Activated by calcium. Autophosphorylation may play an important role in the regulation of the kinase activity. In terms of biological role, during nodulation, plays a central role in bacterial infection and contributes to nodule organogenesis. Protein kinase that recognizes the calcium spiking induced by Nod factors and translates this signal to components controlling nodulation and mycorrhizal infection responses. May phosphorylate the NSP1 protein. Required in epidermal and cortical cells to promote infection thread (IT) formation in root hairs. The sequence is that of Calcium and calcium/calmodulin-dependent serine/threonine-protein kinase DMI-3 from Medicago truncatula (Barrel medic).